We begin with the raw amino-acid sequence, 673 residues long: DNA ligase (673 aa).

Residues 33 to 37 (DYEYD), 82 to 83 (SL), and glutamate 113 contribute to the NAD(+) site. The N6-AMP-lysine intermediate role is filled by lysine 115. NAD(+) contacts are provided by arginine 136, glutamate 170, lysine 285, and lysine 309. Residues cysteine 403, cysteine 406, cysteine 421, and cysteine 426 each contribute to the Zn(2+) site. The region spanning 583 to 672 (AKSDILKGYT…SREEAEKILM (90 aa)) is the BRCT domain.

The protein belongs to the NAD-dependent DNA ligase family. LigA subfamily. The cofactor is Mg(2+). Mn(2+) serves as cofactor.

It catalyses the reaction NAD(+) + (deoxyribonucleotide)n-3'-hydroxyl + 5'-phospho-(deoxyribonucleotide)m = (deoxyribonucleotide)n+m + AMP + beta-nicotinamide D-nucleotide.. Its function is as follows. DNA ligase that catalyzes the formation of phosphodiester linkages between 5'-phosphoryl and 3'-hydroxyl groups in double-stranded DNA using NAD as a coenzyme and as the energy source for the reaction. It is essential for DNA replication and repair of damaged DNA. This chain is DNA ligase, found in Caldicellulosiruptor bescii (strain ATCC BAA-1888 / DSM 6725 / KCTC 15123 / Z-1320) (Anaerocellum thermophilum).